The chain runs to 478 residues: Nuclear distribution protein PAC1 (478 aa).

Residues 9 to 41 (QAEELHKAMIAYLLSANLPKSAAALREELADSV) enclose the LisH domain. Positions 60 to 87 (TSVVRLQKKIMDLESRNNALQSELDSAT) form a coiled coil. 8 WD repeats span residues 113 to 154 (SHRE…RTIK), 156 to 196 (HTKA…KNIR), 200 to 247 (GHDH…CVKT), 250 to 289 (GHVD…TKST), 292 to 352 (GHEH…IKTL), 354 to 393 (GHDN…KCVR), 398 to 439 (AHGH…AASA), and 440 to 477 (INGV…RVFA).

This sequence belongs to the WD repeat LIS1/nudF family. Self-associates. Interacts with NDL1 and dynein.

The protein resides in the cytoplasm. The protein localises to the cytoskeleton. It is found in the spindle pole. In terms of biological role, positively regulates the activity of the minus-end directed microtubule motor protein dynein. May enhance dynein-mediated microtubule sliding by targeting dynein to the microtubule plus end. Required for nuclear migration during vegetative growth as well as development. Required for retrograde early endosome (EE) transport from the hyphal tip. Required for localization of dynein to the mitotic spindle poles. Recruits additional proteins to the dynein complex at SPBs. The protein is Nuclear distribution protein PAC1 of Paracoccidioides brasiliensis (strain Pb18).